Consider the following 393-residue polypeptide: Lysophosphatidic acid receptor 1 (393 aa).

Residues 1–50 (MAAASTSSPVVSQPQFTAMNEPQCFYNESIAFFYNRSGKYLATEWNTVSK) lie on the Extracellular side of the membrane. Disulfide bonds link cysteine 24-cysteine 190 and cysteine 188-cysteine 195. 2 N-linked (GlcNAc...) asparagine glycosylation sites follow: asparagine 27 and asparagine 35. Residue lysine 39 coordinates a 1-acyl-sn-glycero-3-phosphate. Residues 51–75 (LVMGLGITVCIFIMLANLLVMVAIY) traverse the membrane as a helical segment. Over 76-83 (VNRRFHFP) the chain is Cytoplasmic. Residues 84–107 (IYYLMANLAAADFFAGLAYFYLMF) form a helical membrane-spanning segment. Residues 108-121 (NTGPNTRRLTVSTW) lie on the Extracellular side of the membrane. A helical transmembrane segment spans residues 122–144 (LLRQGLIDTTVTASVANLLAIAI). Residue 124 to 129 (RQGLID) coordinates a 1-acyl-sn-glycero-3-phosphate. The Cytoplasmic segment spans residues 145–163 (ERHITVFRMQLHTRMSNRR). The chain crosses the membrane as a helical span at residues 164–184 (VVVVIVVIWTMAIVMGAIPSV). Residues 185-204 (GWNCICDIENCSNMAPLYSD) lie on the Extracellular side of the membrane. A helical transmembrane segment spans residues 205-225 (SYLVFWAIFNLVTFVVMVVLY). Tryptophan 210 contacts a 1-acyl-sn-glycero-3-phosphate. The Cytoplasmic segment spans residues 226–255 (AHIFGYVRQRTMRMSRHSSGPRRNRDTMMS). A helical membrane pass occupies residues 256–280 (LLKTVVIVLGAFIICWTPGLVLLLL). The Extracellular segment spans residues 281 to 294 (DVCCPQCDVLAYEK). Cysteine 284 and cysteine 287 are oxidised to a cystine. A helical transmembrane segment spans residues 295 to 315 (FFLLLAEFNSAMNPIIYSYRD). At 316 to 393 (KEMSATFRQI…PPERPGQGRV (78 aa)) the chain is on the cytoplasmic side. Serine 341 bears the Phosphoserine mark. Position 351 is a phosphothreonine (threonine 351). Positions 369–381 (KMRGGHHLLRDEQ) are enriched in basic and acidic residues. A disordered region spans residues 369–393 (KMRGGHHLLRDEQPPPPERPGQGRV).

The protein belongs to the G-protein coupled receptor 1 family. Interacts with RALA and GRK2. Interacts with GNAQ and GNA13. Interacts with CD14; the interaction is enhanced by exposure to bacterial lipopolysaccharide (LPS). In terms of processing, N-glycosylated. As to expression, detected in brain cortex and in pituitary pars tuberalis.

Its subcellular location is the cell surface. The protein resides in the cell membrane. The protein localises to the endosome. Functionally, receptor for lysophosphatidic acid (LPA). Plays a role in the reorganization of the actin cytoskeleton, cell migration, differentiation and proliferation, and thereby contributes to the responses to tissue damage and infectious agents. Activates downstream signaling cascades via the G(i)/G(o), G(12)/G(13), and G(q) families of heteromeric G proteins. Signaling inhibits adenylyl cyclase activity and decreases cellular cAMP levels. Signaling triggers an increase of cytoplasmic Ca(2+) levels. Activates RALA; this leads to the activation of phospholipase C (PLC) and the formation of inositol 1,4,5-trisphosphate. Signaling mediates activation of down-stream MAP kinases. Contributes to the regulation of cell shape. Promotes Rho-dependent reorganization of the actin cytoskeleton in neuronal cells and neurite retraction. Promotes the activation of Rho and the formation of actin stress fibers. Promotes formation of lamellipodia at the leading edge of migrating cells via activation of RAC1. Through its function as LPA receptor, plays a role in chemotaxis and cell migration, including responses to injury and wounding. Plays a role in triggering inflammation in response to bacterial lipopolysaccharide (LPS) via its interaction with CD14. Promotes cell proliferation in response to LPA. Inhibits the intracellular ciliogenesis pathway in response to LPA and through AKT1 activation. Required for normal skeleton development. May play a role in osteoblast differentiation. Required for normal brain development. Required for normal proliferation, survival and maturation of newly formed neurons in the adult dentate gyrus. Plays a role in pain perception and in the initiation of neuropathic pain. This is Lysophosphatidic acid receptor 1 (LPAR1) from Ovis aries (Sheep).